The chain runs to 414 residues: MFSSESVTEGHPDKICDQISDAIVDALLTADPLSRVAAEVVVNTGMVILTGEITSQAHVNFTRLVRDKVAEIGYTDAKNGFSAESCAVLVAFDEQSPDIAQGVNLALESRTSQEDEFDLIGAGDQGLMFGFACDETPELMPLPISLAHRLSRQLAAVRKNGTLPYLRPDGKTQVTVAYEEGRPVGIHTLLISTQHTPTIGAITEEAAVQERIRADLWEAVVQPVFAELPIKPDGNTRFLTNPTGKFVIGGPQGDAGLTGRKIIVDTYGGYSRHGGGAFSGKDPTKVDRSAAYAARYVAKNIVAAGLAQKCEVQVSYAIGVARPINLLVETFGTGRIPDEALLRLVQRHFDLRPAAILAQFQLRELPRQRGGRFYQNVAVYGHFGQTHLDLPWERTDKAALLREEAFAGATAILG.

Residue H11 coordinates ATP. D13 is a binding site for Mg(2+). Residue E39 coordinates K(+). Residues E52 and Q95 each coordinate L-methionine. The interval 95–105 (QSPDIAQGVNL) is flexible loop. Residues 169–171 (DGK), 245–246 (KF), D254, 260–261 (RK), A277, and K281 contribute to the ATP site. D254 lines the L-methionine pocket. K285 is an L-methionine binding site.

The protein belongs to the AdoMet synthase family. As to quaternary structure, homotetramer; dimer of dimers. The cofactor is Mg(2+). It depends on K(+) as a cofactor.

The protein localises to the cytoplasm. It carries out the reaction L-methionine + ATP + H2O = S-adenosyl-L-methionine + phosphate + diphosphate. The protein operates within amino-acid biosynthesis; S-adenosyl-L-methionine biosynthesis; S-adenosyl-L-methionine from L-methionine: step 1/1. Functionally, catalyzes the formation of S-adenosylmethionine (AdoMet) from methionine and ATP. The overall synthetic reaction is composed of two sequential steps, AdoMet formation and the subsequent tripolyphosphate hydrolysis which occurs prior to release of AdoMet from the enzyme. The protein is S-adenosylmethionine synthase of Synechococcus sp. (strain JA-3-3Ab) (Cyanobacteria bacterium Yellowstone A-Prime).